A 288-amino-acid chain; its full sequence is G1/S-specific cyclin-D2 (288 aa).

The Cyclin N-terminal domain maps to 26–151 (LQNLLTIEER…VLGKLKWNLA (126 aa)). The segment at 264-288 (QHNGSKSVEDPDQATTPTDVRDVDL) is disordered. Phosphoserine is present on Ser-270. Position 279 is a phosphothreonine (Thr-279).

This sequence belongs to the cyclin family. Cyclin D subfamily. In terms of assembly, interacts with either CDK4 or CDK6 protein kinase to form a serine/threonine kinase holoenzyme complex. The cyclin subunit imparts substrate specificity to the complex. Phosphorylation at Thr-279 by MAP kinases is required for ubiquitination and degradation by the DCX(AMBRA1) complex. In terms of processing, ubiquitinated by the DCX(AMBRA1) complex during the transition from G1 to S cell phase, leading to its degradation: ubiquitination is dependent on Thr-279 phosphorylation. The DCX(AMBRA1) complex represents the major regulator of CCND2 stability during the G1/S transition. Polyubiquitinated by the SCF(FBXL2) complex, leading to proteasomal degradation.

It localises to the nucleus. Its subcellular location is the cytoplasm. The protein localises to the nucleus membrane. Regulatory component of the cyclin D2-CDK4 (DC) complex that phosphorylates and inhibits members of the retinoblastoma (RB) protein family including RB1 and regulates the cell-cycle during G(1)/S transition. Phosphorylation of RB1 allows dissociation of the transcription factor E2F from the RB/E2F complex and the subsequent transcription of E2F target genes which are responsible for the progression through the G(1) phase. Hypophosphorylates RB1 in early G(1) phase. Cyclin D-CDK4 complexes are major integrators of various mitogenenic and antimitogenic signals. The chain is G1/S-specific cyclin-D2 (Ccnd2) from Rattus norvegicus (Rat).